Reading from the N-terminus, the 55-residue chain is Large ribosomal subunit protein bL33 (55 aa).

This sequence belongs to the bacterial ribosomal protein bL33 family.

The protein is Large ribosomal subunit protein bL33 of Orientia tsutsugamushi (strain Boryong) (Rickettsia tsutsugamushi).